Reading from the N-terminus, the 142-residue chain is Putative pre-16S rRNA nuclease (142 aa).

It belongs to the YqgF nuclease family.

The protein resides in the cytoplasm. Could be a nuclease involved in processing of the 5'-end of pre-16S rRNA. The polypeptide is Putative pre-16S rRNA nuclease (Staphylococcus haemolyticus (strain JCSC1435)).